A 91-amino-acid polypeptide reads, in one-letter code: Small membrane A-kinase anchor protein (91 aa).

A lipid anchor (N-myristoyl glycine) is attached at G2.

This sequence belongs to the small membrane AKAP family. May be palmitoylated at Cys-3.

It localises to the cell membrane. Functionally, binds to type I regulatory subunits of protein kinase A and may anchor/target them to the plasma membrane. In Xenopus laevis (African clawed frog), this protein is Small membrane A-kinase anchor protein.